A 447-amino-acid chain; its full sequence is MAMAPVSQVPQPRRPHKWYQHLYVQVLIAMALSILLGYFAPDVAKSFGPLGDAFIKLVKMIIAPVIFLTVVTGIAGMRDMKTVGRVIGKAMIYFLCFSTLALVVGLVVVNIVQPGASMHADPAKLSSSLVQTYVQRAHDTSLIGFLLNIIPATPVSALASGDILQVLFFSVLFGIALASVGEAGTPLLKVLESLSASIFRLVAILMRAAPLGAFGAMAYTVGTFGIRSILNLAMLVGTFYITAILFVLIVLGSVARYNGFSILKLIRYIKEELLLVLGTSSSEPALPGLMAKMEAAGCEKTVVGLVIPTGYSFNLDGTNIYMTIAALFIAQALNIPLSWGDQALLLAVAMLSSKGAAGVTGAGFVTLAATLSVIPSIPVAGIGLIFGVDRFMSECRALTNLIGNAVAAIVVARWEGKLDKNQLTAALNGEFGPVEAGEDLAGHVTTS.

Helical transmembrane passes span 21 to 41, 57 to 77, 92 to 112, 141 to 161, 163 to 183, 201 to 221, 232 to 252, 320 to 340, 345 to 365, and 368 to 388; these read HLYV…YFAP, LVKM…IAGM, IYFL…VNIV, SLIG…LASG, ILQV…VGEA, LVAI…AYTV, LAML…IVLG, IYMT…LSWG, LLAV…AGFV, and AATL…IFGV.

Belongs to the dicarboxylate/amino acid:cation symporter (DAACS) (TC 2.A.23) family.

The protein localises to the cell inner membrane. In terms of biological role, responsible for the transport of dicarboxylates such as succinate, fumarate, and malate from the periplasm across the membrane. The protein is C4-dicarboxylate transport protein of Granulibacter bethesdensis (strain ATCC BAA-1260 / CGDNIH1).